The chain runs to 416 residues: UPF0761 membrane protein Mpe_A1422 (416 aa).

6 helical membrane passes run 63 to 83 (IALVPLATVTLAIFSAFPMFG), 120 to 140 (LGTVGLVVLVLTALALMLTID), 159 to 179 (VLVYWAAATLGPLLLGVSLTL), 198 to 218 (LSVLLNALEFGLLAAAMAGLF), 234 to 256 (GGLFVSAGFELAKKGLAWYLAQV), and 271 to 291 (IFLIWLYLGWVIVLLGAVIAA).

This sequence belongs to the UPF0761 family.

It is found in the cell inner membrane. The polypeptide is UPF0761 membrane protein Mpe_A1422 (Methylibium petroleiphilum (strain ATCC BAA-1232 / LMG 22953 / PM1)).